We begin with the raw amino-acid sequence, 931 residues long: Isoleucine--tRNA ligase (931 aa).

Residues 1–14 (MDYSKTLNLPQTQF) show a composition bias toward polar residues. The disordered stretch occupies residues 1-25 (MDYSKTLNLPQTQFPMRGNLPQREP). A 'HIGH' region motif is present at residues 57-67 (PYANGHIHLGH). Glu-559 is an L-isoleucyl-5'-AMP binding site. The 'KMSKS' region motif lies at 600–604 (KMSKS). Lys-603 serves as a coordination point for ATP. Cys-898, Cys-901, Cys-918, and Cys-921 together coordinate Zn(2+).

The protein belongs to the class-I aminoacyl-tRNA synthetase family. IleS type 1 subfamily. In terms of assembly, monomer. It depends on Zn(2+) as a cofactor.

Its subcellular location is the cytoplasm. The enzyme catalyses tRNA(Ile) + L-isoleucine + ATP = L-isoleucyl-tRNA(Ile) + AMP + diphosphate. In terms of biological role, catalyzes the attachment of isoleucine to tRNA(Ile). As IleRS can inadvertently accommodate and process structurally similar amino acids such as valine, to avoid such errors it has two additional distinct tRNA(Ile)-dependent editing activities. One activity is designated as 'pretransfer' editing and involves the hydrolysis of activated Val-AMP. The other activity is designated 'posttransfer' editing and involves deacylation of mischarged Val-tRNA(Ile). The polypeptide is Isoleucine--tRNA ligase (Desulforamulus reducens (strain ATCC BAA-1160 / DSM 100696 / MI-1) (Desulfotomaculum reducens)).